The primary structure comprises 478 residues: PRAME family member 26 (478 aa).

An LRR 1; degenerate repeat occupies 99–126; it reads RWKLQVLDLQDVCENFWMVWSEAMARGC. Residues 181-205 form an LRR 2; degenerate repeat; that stretch reads HLCCKKLKILGMPFRNIRSILKMVN. Residues 206–232 form an LRR 3; degenerate repeat; that stretch reads LDCIQEVEVNCKWVLPILTQFTPYLGH. The LRR 4; degenerate repeat unit spans residues 233–268; the sequence is MRNLQKLVLSHMDVSRYVSPEQKKEIVTQFTTQFLK. LRR repeat units lie at residues 269-294, 295-326, 327-347, 351-378, and 379-403; these read LHCL…LSCL, KTSL…SQLK, TLDL…QILL, AATL…ALSR, and CFEL…LLSH.

The protein belongs to the PRAME family.

In Homo sapiens (Human), this protein is PRAME family member 26.